The primary structure comprises 247 residues: TLC domain-containing protein 1 (247 aa).

An N-terminal signal peptide occupies residues 1 to 27 (MPLLLHPAWPLLLGATLTFRALRRVLC). The Extracellular segment spans residues 28–46 (RLPLPAHVQTDPLRTWRWH). Residues 40–234 (LRTWRWHNLL…LLRSDFCPER (195 aa)) form the TLC domain. The helical transmembrane segment at 47–67 (NLLVSFTHSIVSGIWALLCIW) threads the bilayer. The Cytoplasmic segment spans residues 68 to 83 (QTPEMLVEIETAWSVC). The chain crosses the membrane as a helical span at residues 84–104 (GYLLVCFSAGYFIHDTVDIVV). At 105–123 (SRQTRASWEYLVHHVMAMG) the chain is on the extracellular side. The helical intramembrane region spans 124–144 (AFFSGIFWKRFVGGGVLTLLV). Over 145 to 173 (EVSNIFLTLRMMMKINNAQDILLYKVNKY) the chain is Extracellular. Residues 174–194 (VNLVMYFLFRLAPQAYLTKFF) form a helical membrane-spanning segment. At 195–201 (LQYAGQR) the chain is on the cytoplasmic side. Residues 202-222 (TLGTFLLSILLMLDVMILIYF) form a helical membrane-spanning segment. Residues 223-247 (SRLLRSDFCPERAPSRQQKDKFLTE) lie on the Extracellular side of the membrane.

The protein resides in the cell membrane. Functionally, regulates the composition and fluidity of the plasma membrane. Inhibits the incorporation of membrane-fluidizing phospholipids containing omega-3 long-chain polyunsaturated fatty acids (LCPUFA) and thereby promotes membrane rigidity. Does not appear to have any effect on LCPUFA synthesis. The chain is TLC domain-containing protein 1 (Tlcd1) from Rattus norvegicus (Rat).